The primary structure comprises 686 residues: Chondroitin proteoglycan 1 (686 aa).

The N-terminal stretch at 1–18 (MLPKSVLIVAFLVASSSA) is a signal peptide. Asparagine 46 carries an N-linked (GlcNAc...) asparagine glycan. In terms of domain architecture, Chitin-binding type-2 1 spans 63–120 (DTDCSTKEDGLYAIGGCSPQFLTCSGGIARIMDCPANLIYDQRIIACEYSYNVPECSG). Cysteines 96 and 109 form a disulfide. A glycan (N-linked (GlcNAc...) asparagine) is linked at asparagine 143. Positions 228-285 (DKTCNGKADGFYSFGQCSDHYIACSNGYTIPMQCPARLSFDEARVICDYTMNVPECQN) constitute a Chitin-binding type-2 2 domain. An intrachain disulfide couples cysteine 261 to cysteine 274. The segment at 284–312 (QNGSGNYEGSAEETTTEASGELPYSNGYG) is disordered. 3 N-linked (GlcNAc...) asparagine glycosylation sites follow: asparagine 285, asparagine 635, and asparagine 664. The segment at 658 to 686 (KLRSATNRTSTKEATTRTQNMHAHYHRNH) is disordered.

Required for polar body extrusion during cytokinesis in embryo development. Affects cortical granule size. Shown to have roles in meiotic chromosome segregation, osmotic barrier function and polarization in conjunction with cpg-2. Binds chitin. The protein is Chondroitin proteoglycan 1 (cpg-1) of Caenorhabditis briggsae.